A 305-amino-acid polypeptide reads, in one-letter code: Sodium/potassium-transporting ATPase subunit beta-1 (305 aa).

The Cytoplasmic portion of the chain corresponds to 1 to 32 (MAREKSTDDGGGWKKFLWDSEKKQVLGRTGTS). A helical; Signal-anchor for type II membrane protein transmembrane segment spans residues 33 to 53 (WFKIFVFYLIFYGCLAGIFIG). At 54–305 (TIQVMLLTIS…RFEVKIEVKS (252 aa)) the chain is on the extracellular side. Residue asparagine 114 is glycosylated (N-linked (GlcNAc...) asparagine). A disulfide bridge connects residues cysteine 127 and cysteine 150. Asparagine 159 carries an N-linked (GlcNAc...) asparagine glycan. Cysteines 160 and 176 form a disulfide. N-linked (GlcNAc...) asparagine glycans are attached at residues asparagine 194 and asparagine 267. Residues cysteine 215 and cysteine 278 are joined by a disulfide bond.

The protein belongs to the X(+)/potassium ATPases subunit beta family. In terms of assembly, the sodium/potassium-transporting ATPase is composed of a catalytic alpha subunit, an auxiliary non-catalytic beta subunit and an additional regulatory subunit.

The protein resides in the cell membrane. In terms of biological role, this is the non-catalytic component of the active enzyme, which catalyzes the hydrolysis of ATP coupled with the exchange of Na(+) and K(+) ions across the plasma membrane. The beta subunit regulates, through assembly of alpha/beta heterodimers, the number of sodium pumps transported to the plasma membrane. The chain is Sodium/potassium-transporting ATPase subunit beta-1 (atp1b1) from Tetronarce californica (Pacific electric ray).